Reading from the N-terminus, the 180-residue chain is Endoribonuclease YbeY (180 aa).

Residues H118, H122, and H128 each coordinate Zn(2+).

It belongs to the endoribonuclease YbeY family. Zn(2+) is required as a cofactor.

It is found in the cytoplasm. Functionally, single strand-specific metallo-endoribonuclease involved in late-stage 70S ribosome quality control and in maturation of the 3' terminus of the 16S rRNA. The chain is Endoribonuclease YbeY from Rhodococcus jostii (strain RHA1).